The chain runs to 1230 residues: ABC transporter B family member 5 (1230 aa).

Transmembrane regions (helical) follow at residues 27–47, 78–98, 154–174, 177–197, 253–273, and 286–306; these read VLLMIVGSIGAIANGVCSPLM, LVYLGLGALGAAFLQVACWMI, FIQLISTFVGGFVIAFLRGWL, LVMLTSIPLLAMSGAAIAIIV, GFVTGLGLGVMFLVFFSTYAL, and GYTGGAVINVMVTVVSSSIAL. Residues 30-318 form the ABC transmembrane type-1 1 domain; the sequence is MIVGSIGAIA…ASPCLTAFTA (289 aa). The ABC transporter 1 domain occupies 353–589; sequence IELRDVCFSY…HEGAYSQLLR (237 aa). 388 to 395 is an ATP binding site; that stretch reads GESGSGKS. N-linked (GlcNAc...) asparagine glycosylation is found at N540, N615, and N616. The tract at residues 602–621 is disordered; that stretch reads ISDGSISSGSSRGNNSTRQD. Positions 603 to 617 are enriched in low complexity; the sequence is SDGSISSGSSRGNNS. 2 helical membrane-spanning segments follow: residues 662-682 and 707-727; these read ILILGTLVGAVNGTIFPIFGI and MIFVLLGVAAVIVYPTTNYLF. An ABC transmembrane type-1 2 domain is found at 663 to 950; that stretch reads LILGTLVGAV…ASSFAPDSSK (288 aa). An N-linked (GlcNAc...) asparagine glycan is attached at N759. 3 helical membrane-spanning segments follow: residues 798–818, 889–909, and 924–944; these read IIAFTASWEVAIIILVIIPFI, GVGFGISFFVLYSVYASCFYV, and VFQVFLALTLTAVGISQASSF. The ABC transporter 2 domain maps to 985–1223; it reads IELCHISFTY…EGGVYASLVQ (239 aa). 1020–1027 is a binding site for ATP; it reads GESGSGKS. N-linked (GlcNAc...) asparagine glycosylation is found at N1074, N1174, and N1227.

Belongs to the ABC transporter superfamily. ABCB family. Multidrug resistance exporter (TC 3.A.1.201) subfamily.

The protein resides in the membrane. In Arabidopsis thaliana (Mouse-ear cress), this protein is ABC transporter B family member 5 (ABCB5).